A 138-amino-acid chain; its full sequence is Probable DNA-directed RNA polymerases I, II, and III subunit RPABC2 (138 aa).

Composition is skewed to acidic residues over residues 1-27 (MADD…VIEE) and 35-46 (EEEDDDNNVDEN). The disordered stretch occupies residues 1 to 46 (MADDDDYQDMDNDDFVDDNEMEDVIEEEQQRPDHEEEDDDNNVDEN).

This sequence belongs to the archaeal Rpo6/eukaryotic RPB6 RNA polymerase subunit family. Component of the RNA polymerase I (Pol I), RNA polymerase II (Pol II) and RNA polymerase III (Pol III) complexes consisting of at least 13, 12 and 17 subunits, respectively.

It is found in the nucleus. Its function is as follows. DNA-dependent RNA polymerases catalyze the transcription of DNA into RNA using the four ribonucleoside triphosphates as substrates. Common component of RNA polymerases I, II and III which synthesize ribosomal RNA precursors, mRNA precursors and many functional non-coding RNAs, and small RNAs, such as 5S rRNA and tRNAs, respectively. Pol II is the central component of the basal RNA polymerase II transcription machinery. Pols are composed of mobile elements that move relative to each other. In Pol II, RPB6 is part of the clamp element and together with parts of RPB1 and RPB2 forms a pocket to which the RPB4-RPB7 subcomplex binds. This Caenorhabditis briggsae protein is Probable DNA-directed RNA polymerases I, II, and III subunit RPABC2.